A 664-amino-acid chain; its full sequence is DNA damage checkpoint protein LCD1 (664 aa).

The stretch at Glu38–Leu107 forms a coiled coil. Disordered regions lie at residues Leu61–Glu81 and Thr109–Asn132.

As to quaternary structure, forms a complex with MEC1.

It is found in the cytoplasm. The protein localises to the nucleus. Its function is as follows. Forms a complex with the serine/threonine kinase MEC1 which activates checkpoint signaling upon genotoxic stresses. The MEC1-LCD1 complex is recruited to DNA lesions in order to initiates the DNA repair by homologous recombination. Required for cell growth and meiotic recombination. The sequence is that of DNA damage checkpoint protein LCD1 (LCD1) from Kluyveromyces lactis (strain ATCC 8585 / CBS 2359 / DSM 70799 / NBRC 1267 / NRRL Y-1140 / WM37) (Yeast).